The primary structure comprises 215 residues: MPGEATDTVPATEQELPQPQAETGSGTESDSDESVPELEEQDSTQATTQQAQLAAAAEIDEEPVSKAKQSRSEKKARKAMSKLGLRQVTGVTRVTIRKSKNILFVITKPDVYKSPASDTYIVFGEAKIEDLSQQAQLAAAEKFKVQGEAVSNIQENTQTPTVQEESEEEEVDETGVEVKDIELVMSQANVSRAKAVRALKNNSNDIVNAIMELTM.

The segment at 1-81 is disordered; sequence MPGEATDTVP…SEKKARKAMS (81 aa). A compositionally biased stretch (polar residues) spans 9–28; the sequence is VPATEQELPQPQAETGSGTE. Residues 29–42 are compositionally biased toward acidic residues; sequence SDSDESVPELEEQD. A Phosphoserine; by ILK1 modification is found at serine 43. Residues 44-57 show a composition bias toward low complexity; it reads TQATTQQAQLAAAA. A required for DNA-binding region spans residues 69–80; it reads QSRSEKKARKAM. An NAC-A/B domain is found at 70 to 135; sequence SRSEKKARKA…AKIEDLSQQA (66 aa). The RNA/DNA-binding stretch occupies residues 93 to 108; that stretch reads RVTIRKSKNILFVITK. Phosphoserine is present on serine 132. The residue at position 142 (lysine 142) is an N6-acetyllysine; alternate. Lysine 142 is covalently cross-linked (Glycyl lysine isopeptide (Lys-Gly) (interchain with G-Cter in SUMO2); alternate). At threonine 159 the chain carries Phosphothreonine; by GSK3-beta. The residue at position 161 (threonine 161) is a Phosphothreonine. Serine 166, serine 186, serine 191, and serine 203 each carry phosphoserine. In terms of domain architecture, UBA spans 176 to 213; the sequence is VEVKDIELVMSQANVSRAKAVRALKNNSNDIVNAIMEL.

This sequence belongs to the NAC-alpha family. In terms of assembly, part of the nascent polypeptide-associated complex (NAC), which is a heterodimer of NACA and BTF3 (via NAC-A/B domains). NAC associates with ribosomes through the BTF3/NACB subunit and contacts the ribosomal protein L23, which is positioned near the exiting site. Both subunits can contact nascent polypeptide chains. NACA may also form homodimers, and only this form binds DNA. Interacts with TBP and JUN. Phosphorylation of Ser-43 by ILK during cell adhesion may promote nuclear localization. Phosphorylation of Thr-159 by GSK3B may promote proteasome mediated degradation.

Its subcellular location is the cytoplasm. It localises to the nucleus. Functionally, prevents inappropriate targeting of non-secretory polypeptides to the endoplasmic reticulum (ER). Binds to nascent polypeptide chains as they emerge from the ribosome and blocks their interaction with the signal recognition particle (SRP), which normally targets nascent secretory peptides to the ER. Also reduces the inherent affinity of ribosomes for protein translocation sites in the ER membrane (M sites). May act as a specific coactivator for JUN, binding to DNA and stabilizing the interaction of JUN homodimers with target gene promoters. The polypeptide is Nascent polypeptide-associated complex subunit alpha (NACA) (Bos taurus (Bovine)).